The following is a 162-amino-acid chain: Epoxidase pydX (162 aa).

A signal peptide spans 1-26 (MSLIALPLRLLRLLPAITSTWVLAFA). Helical transmembrane passes span 62 to 82 (WILIVVYPINYALGVVNLFVG) and 89 to 109 (TGAMSWYTIGLLFSLAHMGYM). Residues Asn127 and Asn139 are each glycosylated (N-linked (GlcNAc...) asparagine).

This sequence belongs to the epoxidase xenD family.

The protein resides in the membrane. It participates in mycotoxin biosynthesis. Its function is as follows. Epoxidase; part of the gene cluster that mediates the biosynthesis of pyrrocidines, fungal natural products containing a macrocyclic para-cyclophane connected to a decahydrofluorene ring system that show potent antibiotic activities toward Gram-negative bacteria. Within the pathway, pydX functions synergistically with pydB, pydE and pydZ to form the cyclophane. The pathway begins with the PKS-NRPS pydA which, with the help of the trans-enoyl reductase pydC, synthesizes the polyketide-tyrosyl acyl thioester product which can be reductively off-loaded by the terminal reductase (R) domain in pydA. The alpha/beta hydrolase pydG is then required to catalyze the subsequent Knoevenagel condensation that affords the 3-pyrrolin-2-one ring, whereas the four proteins pydB, pydE, pydX and pydZ then function synergistically to form the cyclophane. PydB and the membrane-bound pydX and pydZ are lipid-binding proteins that can sequester and mold the pdyG product into the inverse S-shape. Binding of the medium chain reductase pydE to the complex would trigger the cascade oxidative cyclization. PydY is involved in the Diels-Alder cycloaddition that forms the decahydrofluorene core. Additional non-enzymatic hydroxylation yields pyrrocidine A2 which can be further reduced into pyrrocidine B by an endogenous reductase. The protein is Epoxidase pydX of Acremonium sp.